Here is a 372-residue protein sequence, read N- to C-terminus: Probable L-tyrosine/L-aspartate decarboxylase (372 aa).

The residue at position 215 (lysine 215) is an N6-(pyridoxal phosphate)lysine.

The protein belongs to the group II decarboxylase family. MfnA subfamily. Pyridoxal 5'-phosphate is required as a cofactor.

It catalyses the reaction L-tyrosine + H(+) = tyramine + CO2. It carries out the reaction L-aspartate + H(+) = beta-alanine + CO2. It participates in cofactor biosynthesis; methanofuran biosynthesis. The protein operates within cofactor biosynthesis; coenzyme A biosynthesis. Functionally, catalyzes the decarboxylation of L-tyrosine to produce tyramine for methanofuran biosynthesis. Can also catalyze the decarboxylation of L-aspartate to produce beta-alanine for coenzyme A (CoA) biosynthesis. The protein is Probable L-tyrosine/L-aspartate decarboxylase of Methanopyrus kandleri (strain AV19 / DSM 6324 / JCM 9639 / NBRC 100938).